The following is a 312-amino-acid chain: Acetyl-coenzyme A carboxylase carboxyl transferase subunit beta (312 aa).

The segment at 1-52 is disordered; sequence MEMDTAVENPAVEKNGQPTPSSTSTATDAAPTPNAPNRPAPNTAGNRKRGVP. Residues 18–32 show a composition bias toward low complexity; that stretch reads PTPSSTSTATDAAPT. The CoA carboxyltransferase N-terminal domain maps to 55–312; the sequence is VWRKCDSCGA…IATAIDYCGK (258 aa). The Zn(2+) site is built by Cys-59, Cys-62, Cys-78, and Cys-81. A C4-type zinc finger spans residues 59–81; sequence CDSCGASLFYKEVQQRLNVCPQC.

It belongs to the AccD/PCCB family. In terms of assembly, acetyl-CoA carboxylase is a heterohexamer composed of biotin carboxyl carrier protein (AccB), biotin carboxylase (AccC) and two subunits each of ACCase subunit alpha (AccA) and ACCase subunit beta (AccD). Requires Zn(2+) as cofactor.

It localises to the cytoplasm. It catalyses the reaction N(6)-carboxybiotinyl-L-lysyl-[protein] + acetyl-CoA = N(6)-biotinyl-L-lysyl-[protein] + malonyl-CoA. It participates in lipid metabolism; malonyl-CoA biosynthesis; malonyl-CoA from acetyl-CoA: step 1/1. Its function is as follows. Component of the acetyl coenzyme A carboxylase (ACC) complex. Biotin carboxylase (BC) catalyzes the carboxylation of biotin on its carrier protein (BCCP) and then the CO(2) group is transferred by the transcarboxylase to acetyl-CoA to form malonyl-CoA. The chain is Acetyl-coenzyme A carboxylase carboxyl transferase subunit beta from Rhodopirellula baltica (strain DSM 10527 / NCIMB 13988 / SH1).